The chain runs to 255 residues: Small ribosomal subunit protein uS2 (255 aa).

This sequence belongs to the universal ribosomal protein uS2 family.

In Geotalea daltonii (strain DSM 22248 / JCM 15807 / FRC-32) (Geobacter daltonii), this protein is Small ribosomal subunit protein uS2.